The sequence spans 557 residues: Ubiquitin C-terminal hydrolase 22 (557 aa).

The UBP-type; degenerate zinc finger occupies 36–130 (FRCFNDARIK…VSKQLFGLGM (95 aa)). Residues C56, C59, C69, C72, C77, H80, H84, and H91 each contribute to the Zn(2+) site. The 355-residue stretch at 177–531 (RGLNNLGSTC…ECYMLFYAQE (355 aa)) folds into the USP domain. C186 acts as the Nucleophile in catalysis. H491 serves as the catalytic Proton acceptor.

It belongs to the peptidase C19 family. Component of a deubiquitination module (DUB module) formed by ENY2, SGF11, and UBP22 in Arabidopsis. Interacts directly with SGF11, but not with ENY2.

It is found in the nucleus. The protein localises to the nucleoplasm. The catalysed reaction is Thiol-dependent hydrolysis of ester, thioester, amide, peptide and isopeptide bonds formed by the C-terminal Gly of ubiquitin (a 76-residue protein attached to proteins as an intracellular targeting signal).. Functionally, component of a deubiquitination module (DUB module) that specifically deubiquinates monoubiquinated histone H2B (H2Bub). Does not seem to be a component of the TREX-2 complex. Seems to act independently of the SAGA multiprotein complex. The DUB module is responsible for the major H2Bub deubiquitinase activity in Arabidopsis. The sequence is that of Ubiquitin C-terminal hydrolase 22 from Arabidopsis thaliana (Mouse-ear cress).